The primary structure comprises 350 residues: C5a anaphylatoxin chemotactic receptor 1 (350 aa).

At 1–37 (MDSFNYTTPDYGHYDDKDTLDPNTPVDKTSNTLRVPD) the chain is on the extracellular side. The required for CHIPS binding stretch occupies residues 10 to 18 (DYGHYDDKD). Residues Y11 and Y14 each carry the sulfotyrosine modification. The involved in C5a binding stretch occupies residues 21-30 (DPNTPVDKTS). The helical transmembrane segment at 38–64 (ILALVIFAVVFLVGVLGNALVVWVTAF) threads the bilayer. The Cytoplasmic segment spans residues 65–69 (EVKRT). Residues 70 to 93 (INAIWFLNLAVADFLSCLALPILF) form a helical membrane-spanning segment. The Extracellular portion of the chain corresponds to 94-110 (TSIVQHHHWPFGGAACR). C109 and C188 form a disulfide bridge. The helical transmembrane segment at 111–132 (ILPSLILLNMYASILLLATISA) threads the bilayer. Over 133-153 (DRFLLVFKPIWCQNFRGAGLA) the chain is Cytoplasmic. Residues 154-174 (WIACAVAWGLALLLTIPSFLY) traverse the membrane as a helical segment. Over 175–200 (RVVREEYFPPKVLCGVDYSHDKQRER) the chain is Extracellular. The helical transmembrane segment at 201–226 (AVAVVRLVLGFLWPLLTLTICYTFIL) threads the bilayer. At 227 to 242 (LRTWSRRATRSTKTLK) the chain is on the cytoplasmic side. The chain crosses the membrane as a helical span at residues 243 to 265 (VVVAVVASFFIFWLPYQVTGIMM). At 266 to 282 (SFLEPSSPTFLLLKKLD) the chain is on the extracellular side. Residues 283-303 (SLCVSFAYINCCINPIIYVVA) traverse the membrane as a helical segment. Over 304–350 (GQGFQGRLRKSLPSLLRNVLTEESVVRESKSFTRSTVDTMAEKTQAV) the chain is Cytoplasmic. Phosphoserine is present on residues S314, S317, S327, S332, S334, and S338.

The protein belongs to the G-protein coupled receptor 1 family. In terms of assembly, homodimer. May also form higher-order oligomers. Interacts (when phosphorylated) with ARRB1 and ARRB2; the interaction is associated with internalization of C5aR. Interacts (via N-terminal domain) with S.aureus chemotaxis inhibitory protein (CHIPS); the interaction blocks the receptor and may thus inhibit the immune response. Sulfation plays a critical role in the association of C5aR with C5a, but no significant role in the ability of the receptor to transduce a signal and mobilize calcium in response to a small peptide agonist. Sulfation at Tyr-14 is important for CHIPS binding. In terms of processing, phosphorylated on serine residues in response to C5a binding, resulting in internalization of the receptor and short-term desensitization to C5a.

It localises to the cell membrane. The protein localises to the cytoplasmic vesicle. Functionally, receptor for the chemotactic and inflammatory peptide anaphylatoxin C5a. The ligand interacts with at least two sites on the receptor: a high-affinity site on the extracellular N-terminus, and a second site in the transmembrane region which activates downstream signaling events. Receptor activation stimulates chemotaxis, granule enzyme release, intracellular calcium release and superoxide anion production. The chain is C5a anaphylatoxin chemotactic receptor 1 (C5AR1) from Gorilla gorilla gorilla (Western lowland gorilla).